Consider the following 432-residue polypeptide: Serine/threonine-protein kinase stk11 (432 aa).

One can recognise a Protein kinase domain in the interval 52-312; sequence YLMGDLLGEG…IQQIRQHNWF (261 aa). Residues 58 to 66 and Lys-81 each bind ATP; that span reads LGEGSYGKV. Asp-179 serves as the catalytic Proton acceptor. Position 192 is a phosphothreonine; by autocatalysis (Thr-192). Residues 398 to 432 are disordered; that stretch reads TESQLKTERRVSSSSQRKASTTGSKVRKLSACKQQ. The segment covering 409–421 has biased composition (polar residues); it reads SSSSQRKASTTGS. Residues 422–432 are compositionally biased toward basic residues; the sequence is KVRKLSACKQQ. Ser-427 carries the post-translational modification Phosphoserine; by PKA.

It belongs to the protein kinase superfamily. CAMK Ser/Thr protein kinase family. LKB1 subfamily. In terms of assembly, catalytic component of a trimeric complex composed of STK11/LKB1, STRAD (STRADA or STRADB) and CAB39/MO25 (CAB39/MO25alpha or CAB39L/MO25beta). Mg(2+) serves as cofactor. The cofactor is Mn(2+). Phosphorylated by a cAMP-dependent protein kinase. Autophosphorylated in a reaction that prefers Mn(2+) to Mg(2+). Oocytes, eggs and early embryos.

It is found in the nucleus. Its subcellular location is the cytoplasm. The enzyme catalyses L-seryl-[protein] + ATP = O-phospho-L-seryl-[protein] + ADP + H(+). It carries out the reaction L-threonyl-[protein] + ATP = O-phospho-L-threonyl-[protein] + ADP + H(+). Functionally, tumor suppressor serine/threonine-protein kinase that controls the activity of AMP-activated protein kinase (AMPK) family members, thereby playing a role in various processes such as cell metabolism, cell polarity, apoptosis and DNA damage response. Acts by phosphorylating the T-loop of AMPK family proteins, leading to promote their activity. The protein is Serine/threonine-protein kinase stk11 of Xenopus laevis (African clawed frog).